Reading from the N-terminus, the 348-residue chain is Probable dual-specificity RNA methyltransferase RlmN (348 aa).

E89 acts as the Proton acceptor in catalysis. The 234-residue stretch at 95-328 (HKNRNTVCVS…VTLRISYGSR (234 aa)) folds into the Radical SAM core domain. An intrachain disulfide couples C102 to C333. Positions 109, 113, and 116 each coordinate [4Fe-4S] cluster. S-adenosyl-L-methionine-binding positions include 159–160 (GE), S191, 214–216 (SLH), and N290. C333 acts as the S-methylcysteine intermediate in catalysis.

It belongs to the radical SAM superfamily. RlmN family. The cofactor is [4Fe-4S] cluster.

The protein resides in the cytoplasm. It catalyses the reaction adenosine(2503) in 23S rRNA + 2 reduced [2Fe-2S]-[ferredoxin] + 2 S-adenosyl-L-methionine = 2-methyladenosine(2503) in 23S rRNA + 5'-deoxyadenosine + L-methionine + 2 oxidized [2Fe-2S]-[ferredoxin] + S-adenosyl-L-homocysteine. It carries out the reaction adenosine(37) in tRNA + 2 reduced [2Fe-2S]-[ferredoxin] + 2 S-adenosyl-L-methionine = 2-methyladenosine(37) in tRNA + 5'-deoxyadenosine + L-methionine + 2 oxidized [2Fe-2S]-[ferredoxin] + S-adenosyl-L-homocysteine. In terms of biological role, specifically methylates position 2 of adenine 2503 in 23S rRNA and position 2 of adenine 37 in tRNAs. The protein is Probable dual-specificity RNA methyltransferase RlmN of Dictyoglomus thermophilum (strain ATCC 35947 / DSM 3960 / H-6-12).